A 48-amino-acid polypeptide reads, in one-letter code: MRKKIILICEHCLNRNYTTTRSKLETTRLVLNKYCSSCNQKTVHKESH.

It belongs to the bacterial ribosomal protein bL33 family.

The chain is Large ribosomal subunit protein bL33B (rpmG 2) from Mycoplasmoides gallisepticum (strain R(low / passage 15 / clone 2)) (Mycoplasma gallisepticum).